The chain runs to 84 residues: ATP synthase subunit c (84 aa).

The next 2 helical transmembrane spans lie at 9 to 29 (IIGA…GFAI) and 54 to 74 (IVAG…LLFI).

This sequence belongs to the ATPase C chain family. F-type ATPases have 2 components, F(1) - the catalytic core - and F(0) - the membrane proton channel. F(1) has five subunits: alpha(3), beta(3), gamma(1), delta(1), epsilon(1). F(0) has three main subunits: a(1), b(2) and c(10-14). The alpha and beta chains form an alternating ring which encloses part of the gamma chain. F(1) is attached to F(0) by a central stalk formed by the gamma and epsilon chains, while a peripheral stalk is formed by the delta and b chains.

It is found in the cell inner membrane. In terms of biological role, f(1)F(0) ATP synthase produces ATP from ADP in the presence of a proton or sodium gradient. F-type ATPases consist of two structural domains, F(1) containing the extramembraneous catalytic core and F(0) containing the membrane proton channel, linked together by a central stalk and a peripheral stalk. During catalysis, ATP synthesis in the catalytic domain of F(1) is coupled via a rotary mechanism of the central stalk subunits to proton translocation. Functionally, key component of the F(0) channel; it plays a direct role in translocation across the membrane. A homomeric c-ring of between 10-14 subunits forms the central stalk rotor element with the F(1) delta and epsilon subunits. This is ATP synthase subunit c from Haemophilus influenzae (strain ATCC 51907 / DSM 11121 / KW20 / Rd).